The chain runs to 447 residues: Methylenetetrahydrofolate--tRNA-(uracil-5-)-methyltransferase TrmFO (447 aa).

FAD is bound at residue 13 to 18 (GAGLAG).

It belongs to the MnmG family. TrmFO subfamily. FAD is required as a cofactor.

It is found in the cytoplasm. It carries out the reaction uridine(54) in tRNA + (6R)-5,10-methylene-5,6,7,8-tetrahydrofolate + NADH + H(+) = 5-methyluridine(54) in tRNA + (6S)-5,6,7,8-tetrahydrofolate + NAD(+). The catalysed reaction is uridine(54) in tRNA + (6R)-5,10-methylene-5,6,7,8-tetrahydrofolate + NADPH + H(+) = 5-methyluridine(54) in tRNA + (6S)-5,6,7,8-tetrahydrofolate + NADP(+). Catalyzes the folate-dependent formation of 5-methyl-uridine at position 54 (M-5-U54) in all tRNAs. The chain is Methylenetetrahydrofolate--tRNA-(uracil-5-)-methyltransferase TrmFO from Streptococcus thermophilus (strain ATCC BAA-491 / LMD-9).